A 304-amino-acid polypeptide reads, in one-letter code: 17-beta-hydroxysteroid dehydrogenase 13 (304 aa).

A signal peptide spans 1–19; that stretch reads MNLILEFLLLVGVIIYSYL. Position 33 is a phosphoserine (Ser33). 40–67 lines the NAD(+) pocket; the sequence is LITGAGHGIGRLTAYEFAKQKSRLVLWD. Lys79 is subject to N6-acetyllysine. Ser172 is a substrate binding site. The active-site Proton acceptor is the Tyr185. Lys189 is an NAD(+) binding site. Residues 276–304 form a disordered region; the sequence is SSKHPHGGSQQPVTPIPGDLTPSSDFLKH.

The protein belongs to the short-chain dehydrogenases/reductases (SDR) family. In terms of tissue distribution, expressed predominantly in the liver (at protein level).

The protein localises to the lipid droplet. The protein resides in the endoplasmic reticulum. It catalyses the reaction 17beta-estradiol + NAD(+) = estrone + NADH + H(+). The enzyme catalyses all-trans-retinol + NAD(+) = all-trans-retinal + NADH + H(+). It carries out the reaction all-trans-retinal + NAD(+) + H2O = all-trans-retinoate + NADH + 2 H(+). Plays a pivotal role in hepatic lipid metabolism. In vitro, it catalyzes the oxidation of a variety of lipid substrates, including 17beta-estradiol, retinol, retinal, and leukotriene B4. This chain is 17-beta-hydroxysteroid dehydrogenase 13 (Hsd17b13), found in Mus musculus (Mouse).